Here is a 72-residue protein sequence, read N- to C-terminus: Crustacean hyperglycemic hormone B (72 aa).

Gln-1 bears the Pyrrolidone carboxylic acid mark. Phe-3 is subject to D-phenylalanine; in form CHHB-II. Intrachain disulfides connect Cys-7–Cys-43, Cys-23–Cys-39, and Cys-26–Cys-52. At Val-72 the chain carries Valine amide.

In terms of processing, stereoinversion of L-Phe (in CHHB-I) to D-Phe (in CHHB-II).

It localises to the secreted. Hormone found in the sinus gland of isopods and decapods which controls the blood sugar level. Has a secretagogue action over the amylase released from the midgut gland. May act as a stress hormone and may be involved in the control of molting and reproduction. The protein is Crustacean hyperglycemic hormone B of Cherax destructor (Common yabby crayfish).